A 185-amino-acid chain; its full sequence is Ribosome-recycling factor (185 aa).

The protein belongs to the RRF family.

It localises to the cytoplasm. In terms of biological role, responsible for the release of ribosomes from messenger RNA at the termination of protein biosynthesis. May increase the efficiency of translation by recycling ribosomes from one round of translation to another. This Carboxydothermus hydrogenoformans (strain ATCC BAA-161 / DSM 6008 / Z-2901) protein is Ribosome-recycling factor.